A 721-amino-acid chain; its full sequence is Zinc-transporting ATPase (721 aa).

The Cytoplasmic portion of the chain corresponds to 1–107; sequence MTQSSPLKTQ…HSHGAGEFNL (107 aa). One can recognise an HMA domain in the interval 8–74; it reads KTQQMQVGGM…RIAALGYTLA (67 aa). Residues Cys-19 and Cys-22 each contribute to the Zn(2+) site. Residues 80 to 101 are disordered; that stretch reads VTLNGHKHPHSHREEGHSHSHG. Residues 108–128 form a helical membrane-spanning segment; that stretch reads KQELLPVLTAIALFTIAILFE. Topologically, residues 129–140 are extracellular; that stretch reads QPLHNTPGQIAE. A helical transmembrane segment spans residues 141–160; that stretch reads FAVIIPAYLLSGWTVLKTAG. At 161–167 the chain is on the cytoplasmic side; that stretch reads RNILRGQ. The chain crosses the membrane as a helical span at residues 168–187; it reads IFDENFLMTIATLGALAIHQ. Topologically, residues 188–190 are extracellular; sequence LPE. Residues 191-210 form a helical membrane-spanning segment; sequence AVAVMLFFRVGELFQEYSVG. Topologically, residues 211–344 are cytoplasmic; that stretch reads RSRRSIKALL…ITQFARYYTP (134 aa). The chain crosses the membrane as a helical span at residues 345 to 363; it reads VIVFLSLAVALLPPLFIPG. The Extracellular portion of the chain corresponds to 364–369; that stretch reads ADRADW. Residues 370-387 traverse the membrane as a helical segment; the sequence is VYRALVLLVISCPCGLVI. Residues 388–671 lie on the Cytoplasmic side of the membrane; that stretch reads SIPLGYFGGI…AIHVARKTRQ (284 aa). The active-site 4-aspartylphosphate intermediate is the Asp-425. Mg(2+) contacts are provided by Asp-618 and Asp-622. The helical transmembrane segment at 672–693 threads the bilayer; that stretch reads IVVQNIVLALGIKALFIALGTI. Over 694-701 the chain is Extracellular; the sequence is GLATLWEA. A helical transmembrane segment spans residues 702-717; sequence VFADVGVALLAILNAT. Topologically, residues 718-721 are cytoplasmic; it reads RIAK.

Belongs to the cation transport ATPase (P-type) (TC 3.A.3) family. Type IB subfamily.

It localises to the cell membrane. It carries out the reaction Zn(2+)(in) + ATP + H2O = Zn(2+)(out) + ADP + phosphate + H(+). The sequence is that of Zinc-transporting ATPase (ziaA) from Synechocystis sp. (strain ATCC 27184 / PCC 6803 / Kazusa).